The sequence spans 311 residues: Formimidoylglutamase (311 aa).

Residues H122, D151, H153, D155, C242, and D244 each coordinate Mn(2+).

Belongs to the arginase family. Homodimer. Requires Mn(2+) as cofactor.

The catalysed reaction is N-formimidoyl-L-glutamate + H2O = formamide + L-glutamate. Its pathway is amino-acid degradation; L-histidine degradation into L-glutamate; L-glutamate from N-formimidoyl-L-glutamate (hydrolase route): step 1/1. Its function is as follows. Catalyzes the conversion of N-formimidoyl-L-glutamate to L-glutamate and formamide. The polypeptide is Formimidoylglutamase (Pseudomonas aeruginosa (strain ATCC 15692 / DSM 22644 / CIP 104116 / JCM 14847 / LMG 12228 / 1C / PRS 101 / PAO1)).